The primary structure comprises 29 residues: Cytochrome b6-f complex subunit 8 (29 aa).

A helical membrane pass occupies residues 3-23; it reads IVSIAWAALMVVFSFSLSLVV.

The protein belongs to the PetN family. The 4 large subunits of the cytochrome b6-f complex are cytochrome b6, subunit IV (17 kDa polypeptide, PetD), cytochrome f and the Rieske protein, while the 4 small subunits are PetG, PetL, PetM and PetN. The complex functions as a dimer.

Its subcellular location is the plastid. The protein resides in the chloroplast thylakoid membrane. Its function is as follows. Component of the cytochrome b6-f complex, which mediates electron transfer between photosystem II (PSII) and photosystem I (PSI), cyclic electron flow around PSI, and state transitions. The polypeptide is Cytochrome b6-f complex subunit 8 (Phaseolus vulgaris (Kidney bean)).